The chain runs to 265 residues: 3-methyl-2-oxobutanoate hydroxymethyltransferase (265 aa).

Mg(2+) is bound by residues D44 and D83. 3-methyl-2-oxobutanoate is bound by residues 44-45 (DS), D83, and K113. A Mg(2+)-binding site is contributed by E115. E183 acts as the Proton acceptor in catalysis.

Belongs to the PanB family. In terms of assembly, homodecamer; pentamer of dimers. The cofactor is Mg(2+).

The protein resides in the cytoplasm. It catalyses the reaction 3-methyl-2-oxobutanoate + (6R)-5,10-methylene-5,6,7,8-tetrahydrofolate + H2O = 2-dehydropantoate + (6S)-5,6,7,8-tetrahydrofolate. It participates in cofactor biosynthesis; (R)-pantothenate biosynthesis; (R)-pantoate from 3-methyl-2-oxobutanoate: step 1/2. In terms of biological role, catalyzes the reversible reaction in which hydroxymethyl group from 5,10-methylenetetrahydrofolate is transferred onto alpha-ketoisovalerate to form ketopantoate. The protein is 3-methyl-2-oxobutanoate hydroxymethyltransferase of Leptospira interrogans serogroup Icterohaemorrhagiae serovar copenhageni (strain Fiocruz L1-130).